Reading from the N-terminus, the 554-residue chain is MVNASVTGIGSMESARRVVEALIRGGVQHVVVSPGSRNAPLVYALAEAQQAIHVVVRIDERSAGFTALGLAIGSSSPVAVLTTSGTAVGNLLPAVMEADHAGVPLLVLSADRPEELRGTGANQTTDQIDLFGSHVRFAADVAAGDLPEPAVRTGLDAALGRLDGVATGPVQLNFAFRDPLTPALDGSDFRPLKSSQPVDAAIETIIPQHQESEHRYQTVVLAGHGAGPQAELFARRHGLPLLAEPSSNARFGPNAVGPYRLLLEHFEALIERVVIFGRPTLSRPVAALMNRADLPRALYLPRPATWFEEGKRSEQIISDWAALSEFTGSGSASWLEIWLAAQIQAEAALDDALGEELSGLRLARELWGSSENLVIGSSNPIRDADLAGRPRSESPRVHANRGLAGIDGTISTATGIALATARPTRLLVGDLTFLHDVGGLLLPRGEQVPDLQIVVLNDSGGGIFTLLEHGTLGDEPAYQAAVERYFGTAHDAELASLAAAYGLEYQLVSSTEQLVEMLQAPVSGRSVLEIRTERTALRGLHDRVRAAISAALTI.

Belongs to the TPP enzyme family. MenD subfamily. In terms of assembly, homodimer. Requires Mg(2+) as cofactor. Mn(2+) serves as cofactor. Thiamine diphosphate is required as a cofactor.

It carries out the reaction isochorismate + 2-oxoglutarate + H(+) = 5-enolpyruvoyl-6-hydroxy-2-succinyl-cyclohex-3-ene-1-carboxylate + CO2. It participates in quinol/quinone metabolism; 1,4-dihydroxy-2-naphthoate biosynthesis; 1,4-dihydroxy-2-naphthoate from chorismate: step 2/7. Its pathway is quinol/quinone metabolism; menaquinone biosynthesis. Catalyzes the thiamine diphosphate-dependent decarboxylation of 2-oxoglutarate and the subsequent addition of the resulting succinic semialdehyde-thiamine pyrophosphate anion to isochorismate to yield 2-succinyl-5-enolpyruvyl-6-hydroxy-3-cyclohexene-1-carboxylate (SEPHCHC). The chain is 2-succinyl-5-enolpyruvyl-6-hydroxy-3-cyclohexene-1-carboxylate synthase from Renibacterium salmoninarum (strain ATCC 33209 / DSM 20767 / JCM 11484 / NBRC 15589 / NCIMB 2235).